Here is a 436-residue protein sequence, read N- to C-terminus: Ribosome biogenesis protein WDR12 homolog (436 aa).

The tract at residues 13–97 (VRVRFLTKLP…ERVLELEYVK (85 aa)) is ubiquitin-like (UBL) domain. WD repeat units follow at residues 109-147 (PHDDWVSAVDGSNPSFVLTGCYDGLARIWRDASECTHIL), 149-193 (GHSD…SVPK), 203-242 (GHTSSVQSVAVDPSTNMICSGSWDNSIKLWSVEGSEEDGD), 273-311 (GHTQCVSAVTWPERQTIYSASWDHSVRQWDVQTGKETWN), 313-353 (VSGK…TLAP), 359-399 (SHKS…PLAS), and 402-436 (SHKDKVLCADWWKGDSVISGGADSKLCIASGIEIV). The disordered stretch occupies residues 240 to 262 (DGDTVSVKKRRTNSDSSGPEESL).

This sequence belongs to the WD repeat WDR12/YTM1 family.

The protein resides in the nucleus. It is found in the nucleolus. Its subcellular location is the nucleoplasm. In terms of biological role, required for maturation of ribosomal RNAs and formation of the large ribosomal subunit. The protein is Ribosome biogenesis protein WDR12 homolog of Oryza sativa subsp. japonica (Rice).